Reading from the N-terminus, the 365-residue chain is Class I histocompatibility antigen, Gogo-A*0401 alpha chain (365 aa).

Residues 1 to 24 (MAVMAPRTLVLLLSGALALTQTWA) form the signal peptide. The interval 25–114 (GSHSMRYFYT…LRGYYNQSED (90 aa)) is alpha-1. Residues 25 to 308 (GSHSMRYFYT…EPSSQPTIPI (284 aa)) lie on the Extracellular side of the membrane. An N-linked (GlcNAc...) asparagine glycan is attached at N110. An alpha-2 region spans residues 115–206 (GSHTIQRMYG…ENGKETLQLT (92 aa)). 2 disulfides stabilise this stretch: C125/C188 and C227/C283. Residues 207–298 (DAPKTHMTHH…GLPKPLTLRW (92 aa)) form an alpha-3 region. One can recognise an Ig-like C1-type domain in the interval 209 to 295 (PKTHMTHHPV…QHEGLPKPLT (87 aa)). Positions 299-308 (EPSSQPTIPI) are connecting peptide. Residues 309–332 (VGIIAGLVLFGAVIAGAVVAAVRW) traverse the membrane as a helical segment. Residues 333–365 (RRKSSDRKGGSYSQAASSDSAQGSDVSLTACKV) lie on the Cytoplasmic side of the membrane. Positions 338 to 365 (DRKGGSYSQAASSDSAQGSDVSLTACKV) are disordered. A compositionally biased stretch (low complexity) spans 342 to 359 (GSYSQAASSDSAQGSDVS). S343 carries the post-translational modification Phosphoserine. Y344 carries the post-translational modification Phosphotyrosine. A phosphoserine mark is found at S345, S349, S350, S352, S356, and S359.

This sequence belongs to the MHC class I family. In terms of assembly, heterodimer of an alpha chain and a beta chain (beta-2-microglobulin).

The protein resides in the membrane. Involved in the presentation of foreign antigens to the immune system. This Gorilla gorilla gorilla (Western lowland gorilla) protein is Class I histocompatibility antigen, Gogo-A*0401 alpha chain.